Reading from the N-terminus, the 88-residue chain is Small ribosomal subunit protein uS17 (88 aa).

This sequence belongs to the universal ribosomal protein uS17 family. As to quaternary structure, part of the 30S ribosomal subunit.

In terms of biological role, one of the primary rRNA binding proteins, it binds specifically to the 5'-end of 16S ribosomal RNA. This chain is Small ribosomal subunit protein uS17, found in Prochlorococcus marinus subsp. pastoris (strain CCMP1986 / NIES-2087 / MED4).